A 119-amino-acid polypeptide reads, in one-letter code: Holo-[acyl-carrier-protein] synthase (119 aa).

Mg(2+) is bound by residues Asp-6 and Glu-51.

It belongs to the P-Pant transferase superfamily. AcpS family. Requires Mg(2+) as cofactor.

Its subcellular location is the cytoplasm. It catalyses the reaction apo-[ACP] + CoA = holo-[ACP] + adenosine 3',5'-bisphosphate + H(+). Its function is as follows. Transfers the 4'-phosphopantetheine moiety from coenzyme A to a Ser of acyl-carrier-protein. In Sulfurovum sp. (strain NBC37-1), this protein is Holo-[acyl-carrier-protein] synthase.